A 315-amino-acid polypeptide reads, in one-letter code: tRNA dimethylallyltransferase (315 aa).

Residue 18–25 (GPTASGKT) participates in ATP binding. 20 to 25 (TASGKT) serves as a coordination point for substrate. 3 interaction with substrate tRNA regions span residues 43-46 (DSAL), 167-171 (QRLSR), and 248-253 (RCVGYR).

Belongs to the IPP transferase family. Monomer. Mg(2+) is required as a cofactor.

It catalyses the reaction adenosine(37) in tRNA + dimethylallyl diphosphate = N(6)-dimethylallyladenosine(37) in tRNA + diphosphate. Catalyzes the transfer of a dimethylallyl group onto the adenine at position 37 in tRNAs that read codons beginning with uridine, leading to the formation of N6-(dimethylallyl)adenosine (i(6)A). The sequence is that of tRNA dimethylallyltransferase from Pseudoalteromonas atlantica (strain T6c / ATCC BAA-1087).